The primary structure comprises 604 residues: Elongation factor 4 (604 aa).

The 182-residue stretch at 10-191 folds into the tr-type G domain; sequence KNIRNFSIIA…KIITTIPAPS (182 aa). Residues 22 to 27 and 138 to 141 each bind GTP; these read DHGKST and NKID.

This sequence belongs to the TRAFAC class translation factor GTPase superfamily. Classic translation factor GTPase family. LepA subfamily.

It localises to the cell inner membrane. The enzyme catalyses GTP + H2O = GDP + phosphate + H(+). Its function is as follows. Required for accurate and efficient protein synthesis under certain stress conditions. May act as a fidelity factor of the translation reaction, by catalyzing a one-codon backward translocation of tRNAs on improperly translocated ribosomes. Back-translocation proceeds from a post-translocation (POST) complex to a pre-translocation (PRE) complex, thus giving elongation factor G a second chance to translocate the tRNAs correctly. Binds to ribosomes in a GTP-dependent manner. The sequence is that of Elongation factor 4 from Helicobacter pylori (strain P12).